The chain runs to 286 residues: 3-hydroxyanthranilate 3,4-dioxygenase (286 aa).

The tract at residues 1–160 is domain A (catalytic); the sequence is MERRVRVKSW…SEQYRTGKPN (160 aa). Arginine 43 lines the O2 pocket. Residues histidine 47, glutamate 53, and histidine 91 each coordinate Fe cation. A substrate-binding site is contributed by glutamate 53. The substrate site is built by arginine 95 and glutamate 105. The interval 161–177 is linker; sequence PDQLLKELPFPLNTRSI. A domain B region spans residues 178–286; that stretch reads MKPMSLKAWL…QDPARKKPWW (109 aa).

Belongs to the 3-HAO family. Monomer. Requires Fe(2+) as cofactor.

It localises to the cytoplasm. It is found in the cytosol. The catalysed reaction is 3-hydroxyanthranilate + O2 = (2Z,4Z)-2-amino-3-carboxymuconate 6-semialdehyde. It participates in cofactor biosynthesis; NAD(+) biosynthesis; quinolinate from L-kynurenine: step 3/3. Functionally, catalyzes the oxidative ring opening of 3-hydroxyanthranilate to 2-amino-3-carboxymuconate semialdehyde, which spontaneously cyclizes to quinolinate. In Mus musculus (Mouse), this protein is 3-hydroxyanthranilate 3,4-dioxygenase (Haao).